The primary structure comprises 515 residues: Fatty acyl-CoA reductase 1 (515 aa).

The Cytoplasmic segment spans residues 1 to 465 (MVSIPEYYEG…ARKHLNKLRN (465 aa)). The tract at residues 451-507 (SGLPAARKHLNKLRNIRYGFNTILVILIWRIFIARSQMARNIWYFVVSLCYKFLSYF) is necessary and sufficient for PEX19-mediated localization into peroxisome membrane. Residues 466-483 (IRYGFNTILVILIWRIFI) traverse the membrane as a helical segment. Residues 484 to 515 (ARSQMARNIWYFVVSLCYKFLSYFRASSTMRY) are Peroxisomal-facing.

It belongs to the fatty acyl-CoA reductase family. As to quaternary structure, interacts with PEX19; PEX19 mediates the targeting of FAR1 to peroxisomes.

The protein resides in the peroxisome membrane. The catalysed reaction is a long-chain fatty acyl-CoA + 2 NADPH + 2 H(+) = a long-chain primary fatty alcohol + 2 NADP(+) + CoA. It catalyses the reaction hexadecanoyl-CoA + 2 NADPH + 2 H(+) = hexadecan-1-ol + 2 NADP(+) + CoA. The enzyme catalyses octadecanoyl-CoA + 2 NADPH + 2 H(+) = octadecan-1-ol + 2 NADP(+) + CoA. It carries out the reaction eicosanoyl-CoA + 2 NADPH + 2 H(+) = eicosan-1-ol + 2 NADP(+) + CoA. The catalysed reaction is (9Z)-octadecenoyl-CoA + 2 NADPH + 2 H(+) = (9Z)-octadecen-1-ol + 2 NADP(+) + CoA. It catalyses the reaction (9Z,12Z)-octadecadienoyl-CoA + 2 NADPH + 2 H(+) = (9Z,12Z)-octadecadien-1-ol + 2 NADP(+) + CoA. The enzyme catalyses 16-methylheptadecanoyl-CoA + 2 NADPH + 2 H(+) = 16-methylheptadecan-1-ol + 2 NADP(+) + CoA. It carries out the reaction 18-methylnonadecanoyl-CoA + 2 NADPH + 2 H(+) = 18-methylnonadecan-1-ol + 2 NADP(+) + CoA. Its function is as follows. Catalyzes the reduction of saturated and unsaturated C16 or C18 fatty acyl-CoA to fatty alcohols. It plays an essential role in the production of ether lipids/plasmalogens which synthesis requires fatty alcohols. In parallel, it is also required for wax monoesters production since fatty alcohols also constitute a substrate for their synthesis. This is Fatty acyl-CoA reductase 1 from Homo sapiens (Human).